The chain runs to 94 residues: Small ribosomal subunit protein uS19 (94 aa).

The tract at residues Glu73 to Lys94 is disordered.

This sequence belongs to the universal ribosomal protein uS19 family.

In terms of biological role, protein S19 forms a complex with S13 that binds strongly to the 16S ribosomal RNA. The polypeptide is Small ribosomal subunit protein uS19 (Kosmotoga olearia (strain ATCC BAA-1733 / DSM 21960 / TBF 19.5.1)).